The sequence spans 173 residues: Transcriptional repressor NrdR (173 aa).

The segment at 3-34 is a zinc-finger region; it reads CPYCGSLDTQVKDSRPTEDNTAIRRRRVCPDC. Positions 49 to 139 constitute an ATP-cone domain; the sequence is LMVVKRSGRR…VYRNFREARD (91 aa).

The protein belongs to the NrdR family. Zn(2+) is required as a cofactor.

Functionally, negatively regulates transcription of bacterial ribonucleotide reductase nrd genes and operons by binding to NrdR-boxes. This chain is Transcriptional repressor NrdR, found in Azorhizobium caulinodans (strain ATCC 43989 / DSM 5975 / JCM 20966 / LMG 6465 / NBRC 14845 / NCIMB 13405 / ORS 571).